A 278-amino-acid polypeptide reads, in one-letter code: Tryptophan synthase alpha chain (278 aa).

Active-site proton acceptor residues include Glu50 and Asp61.

The protein belongs to the TrpA family. As to quaternary structure, tetramer of two alpha and two beta chains.

The enzyme catalyses (1S,2R)-1-C-(indol-3-yl)glycerol 3-phosphate + L-serine = D-glyceraldehyde 3-phosphate + L-tryptophan + H2O. Its pathway is amino-acid biosynthesis; L-tryptophan biosynthesis; L-tryptophan from chorismate: step 5/5. The alpha subunit is responsible for the aldol cleavage of indoleglycerol phosphate to indole and glyceraldehyde 3-phosphate. In Rhodopseudomonas palustris (strain ATCC BAA-98 / CGA009), this protein is Tryptophan synthase alpha chain.